Here is a 137-residue protein sequence, read N- to C-terminus: uncharacterized protein (137 aa).

The next 4 helical transmembrane spans lie at 14–34, 48–68, 84–104, and 109–129; these read AVVV…GSIS, YHII…SLSI, FFTI…LGLT, and HIPS…LNLF.

The protein localises to the cell membrane. This is an uncharacterized protein from Methanocaldococcus jannaschii (strain ATCC 43067 / DSM 2661 / JAL-1 / JCM 10045 / NBRC 100440) (Methanococcus jannaschii).